Consider the following 148-residue polypeptide: Antigen GM6 (148 aa).

The disordered stretch occupies residues 1–22 (KLKASDSRSFLDPMPEGVPLSE). 2 consecutive repeat copies span residues 1-68 (KLKA…HELA) and 69-136 (KLKA…HELA). A 3; truncated repeat occupies 137-148 (KLKASDSRSFQS).

It localises to the cytoplasm. The protein resides in the cytoskeleton. The protein is Antigen GM6 (GM6) of Trypanosoma brucei gambiense.